We begin with the raw amino-acid sequence, 695 residues long: L-type lectin-domain containing receptor kinase S.7 (695 aa).

An N-terminal signal peptide occupies residues Met1 to Ala23. The Extracellular segment spans residues Ala24–Lys331. Positions Tyr37–Gly276 are legume-lectin like. Residues Asn45 and Asn279 are each glycosylated (N-linked (GlcNAc...) asparagine). A compositionally biased stretch (pro residues) spans Pro286 to His320. Positions Pro286 to His323 are disordered. Residues Val332 to Val352 traverse the membrane as a helical segment. Residues Leu353–Arg695 are Cytoplasmic-facing. Phosphothreonine is present on Thr376. Position 378 is a phosphoserine (Ser378). A phosphothreonine mark is found at Thr386 and Thr403. A Protein kinase domain is found at Phe389–Ile661. Residues Ile395 to Thr403 and Lys418 contribute to the ATP site. Asp514 acts as the Proton acceptor in catalysis. Thr657 is subject to Phosphothreonine.

The protein in the N-terminal section; belongs to the leguminous lectin family. This sequence in the C-terminal section; belongs to the protein kinase superfamily. Ser/Thr protein kinase family. Interacts with INP1. Interaction with INP1 is required for DAF1 polar localization at the future aperture sites in tetrads. Post-translationally, autophosphorylated at Thr-376; Ser-378; Thr-386; Thr-403 and Thr-657. Expressed in roots, leaves, lemma, palea, pistil and anthers.

It localises to the cell membrane. It is found in the cytoplasm. The protein localises to the cytosol. The enzyme catalyses L-seryl-[protein] + ATP = O-phospho-L-seryl-[protein] + ADP + H(+). The catalysed reaction is L-threonyl-[protein] + ATP = O-phospho-L-threonyl-[protein] + ADP + H(+). Its function is as follows. Legume-lectin receptor-like kinase required for normal pollen development and male fertility. Regulates pollen exine assembly and aperture development. Plays a critical role in annulus formation, and may participate in the formation of the fibrillar-granular layer underneath the operculum. May function by regulating the expression of genes involved in pollen exine development. Kinase activity is required for its function in pollen development. The sequence is that of L-type lectin-domain containing receptor kinase S.7 from Oryza sativa subsp. japonica (Rice).